Reading from the N-terminus, the 172-residue chain is Protein-export protein SecB (172 aa).

Positions 152 to 172 (AQGAEGGNSGIVMPDGSQARH) are disordered.

Belongs to the SecB family. In terms of assembly, homotetramer, a dimer of dimers. One homotetramer interacts with 1 SecA dimer.

Its subcellular location is the cytoplasm. In terms of biological role, one of the proteins required for the normal export of preproteins out of the cell cytoplasm. It is a molecular chaperone that binds to a subset of precursor proteins, maintaining them in a translocation-competent state. It also specifically binds to its receptor SecA. This is Protein-export protein SecB from Cupriavidus taiwanensis (strain DSM 17343 / BCRC 17206 / CCUG 44338 / CIP 107171 / LMG 19424 / R1) (Ralstonia taiwanensis (strain LMG 19424)).